The primary structure comprises 156 residues: uncharacterized protein (156 aa).

Positions 1–12 (MSSRFARSNGNP) are enriched in polar residues. The interval 1 to 27 (MSSRFARSNGNPNHIRKRNHSPDPIGI) is disordered. Ser-21 is subject to Phosphoserine.

It localises to the cytoplasm. The protein localises to the nucleus. This is an uncharacterized protein from Saccharomyces cerevisiae (strain ATCC 204508 / S288c) (Baker's yeast).